Reading from the N-terminus, the 126-residue chain is Thioredoxin domain-containing protein, mitochondrial (126 aa).

The region spanning 14–120 is the Thioredoxin domain; that stretch reads SQKIATNTSF…ILEFLNHIET (107 aa).

It belongs to the thioredoxin family.

The protein localises to the mitochondrion. This chain is Thioredoxin domain-containing protein, mitochondrial, found in Dictyostelium discoideum (Social amoeba).